We begin with the raw amino-acid sequence, 416 residues long: Neurotensin receptor type 2 (416 aa).

The Extracellular segment spans residues 1-32; sequence METSSLWPPRPSPSAGLSLEARLGVDTRLWAK. A helical membrane pass occupies residues 33–55; sequence VLFTALYSLIFALGTAGNALSVH. The Cytoplasmic portion of the chain corresponds to 56–64; that stretch reads VVLKARAGR. Residues 65-87 traverse the membrane as a helical segment; the sequence is PGRLRYHVLSLALSALLLLLISV. Residues 88–109 are Extracellular-facing; sequence PMELYNFVWSHYPWVFGDLGCR. A disulfide bond links Cys108 and Cys194. A helical membrane pass occupies residues 110-131; that stretch reads GYYFVRELCAYATVLSVASLSA. At 132-154 the chain is on the cytoplasmic side; that stretch reads ERCLAVCQPLRARRLLTPRRTRR. Residues 155-176 form a helical membrane-spanning segment; sequence LLSLVWVASLGLALPMAVIMGQ. Topologically, residues 177–217 are extracellular; it reads KHEMERADGEPEPASRVCTVLVSRATLQVFIQVNVLVSFVL. The chain crosses the membrane as a helical span at residues 218–237; sequence PLALTAFLNGITVNHLVALY. Residues 238-297 lie on the Cytoplasmic side of the membrane; sequence SQVPSASAQVNSIPSRLELLSEEGLLGFITWRKTLSLGVQASLVRHKDASQIRSLQHSAQ. The helical transmembrane segment at 298-318 threads the bilayer; it reads VLRAIVAVYVICWLPYHARRL. Topologically, residues 319-337 are extracellular; that stretch reads MYCYIPDDGWTDELYDFYH. The chain crosses the membrane as a helical span at residues 338-358; the sequence is YFYMVTNTLFYVSSAVTPVLY. The Cytoplasmic portion of the chain corresponds to 359-416; sequence NAVSSSFRKLFLESLSSLCGEQRSVVPLPQEAPESTTSTYSFRLWGSPRNPSLGEIQV. The S-palmitoyl cysteine moiety is linked to residue Cys377. Ser410 carries the post-translational modification Phosphoserine.

The protein belongs to the G-protein coupled receptor 1 family. Neurotensin receptor subfamily. NTSR2 sub-subfamily. In terms of tissue distribution, expressed maximally in the cerebellum, hippocampus, piriform cortex and neocortex of adult brain.

The protein localises to the cell membrane. Receptor for the tridecapeptide neurotensin. It is associated with G proteins that activate a phosphatidylinositol-calcium second messenger system. The polypeptide is Neurotensin receptor type 2 (Ntsr2) (Mus musculus (Mouse)).